Here is a 170-residue protein sequence, read N- to C-terminus: UPF0260 protein RPC_1790 (170 aa).

It belongs to the UPF0260 family.

The polypeptide is UPF0260 protein RPC_1790 (Rhodopseudomonas palustris (strain BisB18)).